The primary structure comprises 226 residues: Enolase-phosphatase E1 (226 aa).

The protein belongs to the HAD-like hydrolase superfamily. MasA/MtnC family. In terms of assembly, monomer. The cofactor is Mg(2+).

The enzyme catalyses 5-methylsulfanyl-2,3-dioxopentyl phosphate + H2O = 1,2-dihydroxy-5-(methylsulfanyl)pent-1-en-3-one + phosphate. It functions in the pathway amino-acid biosynthesis; L-methionine biosynthesis via salvage pathway; L-methionine from S-methyl-5-thio-alpha-D-ribose 1-phosphate: step 3/6. Its pathway is amino-acid biosynthesis; L-methionine biosynthesis via salvage pathway; L-methionine from S-methyl-5-thio-alpha-D-ribose 1-phosphate: step 4/6. Bifunctional enzyme that catalyzes the enolization of 2,3-diketo-5-methylthiopentyl-1-phosphate (DK-MTP-1-P) into the intermediate 2-hydroxy-3-keto-5-methylthiopentenyl-1-phosphate (HK-MTPenyl-1-P), which is then dephosphorylated to form the acireductone 1,2-dihydroxy-3-keto-5-methylthiopentene (DHK-MTPene). This Shewanella baltica (strain OS195) protein is Enolase-phosphatase E1.